Consider the following 428-residue polypeptide: Putative zinc metalloprotease LL2128 (428 aa).

His19 provides a ligand contact to Zn(2+). Residue Glu20 is part of the active site. His23 contributes to the Zn(2+) binding site. A run of 3 helical transmembrane segments spans residues 188–210 (GPLN…QGGV), 354–376 (IVYL…IPVL), and 401–423 (IITM…NDIL). Positions 188-282 (GPLNNFILGI…SETLSVTPKK (95 aa)) constitute a PDZ domain.

Belongs to the peptidase M50B family. Zn(2+) serves as cofactor.

It is found in the cell membrane. The chain is Putative zinc metalloprotease LL2128 from Lactococcus lactis subsp. lactis (strain IL1403) (Streptococcus lactis).